The following is a 379-amino-acid chain: Dual-specificity RNA methyltransferase RlmN (379 aa).

Glu95 acts as the Proton acceptor in catalysis. A Radical SAM core domain is found at 101-345 (EETRGTLCVS…TTVRKTRGDD (245 aa)). The cysteines at positions 108 and 350 are disulfide-linked. [4Fe-4S] cluster contacts are provided by Cys115, Cys119, and Cys122. Residues 176–177 (GE), Ser208, 230–232 (SLH), and Asn307 contribute to the S-adenosyl-L-methionine site. The S-methylcysteine intermediate role is filled by Cys350.

Belongs to the radical SAM superfamily. RlmN family. The cofactor is [4Fe-4S] cluster.

It localises to the cytoplasm. It catalyses the reaction adenosine(2503) in 23S rRNA + 2 reduced [2Fe-2S]-[ferredoxin] + 2 S-adenosyl-L-methionine = 2-methyladenosine(2503) in 23S rRNA + 5'-deoxyadenosine + L-methionine + 2 oxidized [2Fe-2S]-[ferredoxin] + S-adenosyl-L-homocysteine. It carries out the reaction adenosine(37) in tRNA + 2 reduced [2Fe-2S]-[ferredoxin] + 2 S-adenosyl-L-methionine = 2-methyladenosine(37) in tRNA + 5'-deoxyadenosine + L-methionine + 2 oxidized [2Fe-2S]-[ferredoxin] + S-adenosyl-L-homocysteine. Its function is as follows. Specifically methylates position 2 of adenine 2503 in 23S rRNA and position 2 of adenine 37 in tRNAs. m2A2503 modification seems to play a crucial role in the proofreading step occurring at the peptidyl transferase center and thus would serve to optimize ribosomal fidelity. This chain is Dual-specificity RNA methyltransferase RlmN, found in Burkholderia ambifaria (strain MC40-6).